The primary structure comprises 281 residues: NAD kinase (281 aa).

D61 serves as the catalytic Proton acceptor. Residues 61-62 (DG), 134-135 (ND), R145, D164, 175-180 (TAYSLS), and Q234 contribute to the NAD(+) site.

This sequence belongs to the NAD kinase family. A divalent metal cation is required as a cofactor.

It localises to the cytoplasm. It carries out the reaction NAD(+) + ATP = ADP + NADP(+) + H(+). In terms of biological role, involved in the regulation of the intracellular balance of NAD and NADP, and is a key enzyme in the biosynthesis of NADP. Catalyzes specifically the phosphorylation on 2'-hydroxyl of the adenosine moiety of NAD to yield NADP. The protein is NAD kinase of Clostridium botulinum (strain ATCC 19397 / Type A).